The primary structure comprises 462 residues: Aquaporin-1 (462 aa).

Polar residues predominate over residues 1–11; the sequence is MTMRSPLTNDH. The tract at residues 1 to 24 is disordered; sequence MTMRSPLTNDHPQPLRASPLSEHD. The Cytoplasmic portion of the chain corresponds to 1–146; sequence MTMRSPLTND…KWMNSDWKNH (146 aa). A helical transmembrane segment spans residues 147-167; that stretch reads IVAVIGELIGTSLFLFFGYAG. The Extracellular segment spans residues 168-182; that stretch reads IEVAKLQGREPPDLE. The helical transmembrane segment at 183–203 threads the bilayer; the sequence is VLFYISATFGASLMVTAWIFF. Residues 204-229 are Cytoplasmic-facing; it reads RISGGLFNPAVTLALAILKAVSPIRA. The NPA 1 signature appears at 211-213; sequence NPA. The helical transmembrane segment at 230–250 threads the bilayer; it reads FLLVITQLGASCLAAILVQEI. Topologically, residues 251–269 are extracellular; sequence FPKQLDVATTLGSGTSMGQ. Residues 270-290 form a helical membrane-spanning segment; that stretch reads GFVIEAITTAALIFTIIMLAV. The Cytoplasmic portion of the chain corresponds to 291-296; the sequence is EKHKAT. A helical transmembrane segment spans residues 297–317; that stretch reads FVAPIGIGLALFVAHMVAVPF. Over 318–341 the chain is Extracellular; the sequence is TGASLNPARSFGPSAIVWNFPREH. The short motif at 323–325 is the NPA 2 element; sequence NPA. Residues 342–362 traverse the membrane as a helical segment; sequence WIYWVGPILGAGLAVLFFRLI. Residues 363–462 lie on the Cytoplasmic side of the membrane; sequence KLMEYEMANP…WRRQQYRNVV (100 aa). Residues 407–433 form a disordered region; sequence GKSWYRDDSSSGSMRRKESVNSFTGGR. Residues 410 to 425 are compositionally biased toward basic and acidic residues; sequence WYRDDSSSGSMRRKES.

It belongs to the MIP/aquaporin (TC 1.A.8) family.

It is found in the membrane. It catalyses the reaction H2O(in) = H2O(out). Functionally, water channel required to facilitate the transport of water across membranes. Involved in conidiation. This Botryotinia fuckeliana (strain B05.10) (Noble rot fungus) protein is Aquaporin-1.